The following is a 697-amino-acid chain: Hormonally up-regulated neu tumor-associated kinase homolog (697 aa).

One can recognise a Protein kinase domain in the interval 55–313 (YLIGRKLGEG…IQQALANRWL (259 aa)). ATP contacts are provided by residues 61–69 (LGEGSFAKV) and Lys84. The active-site Proton acceptor is the Asp179. 2 stretches are compositionally biased toward basic and acidic residues: residues 405–424 (KMNKNSYEERRSKDLEKRGE) and 460–473 (PVKERRSSKSERES). Disordered stretches follow at residues 405–480 (KMNK…LSPF) and 586–642 (DNTS…NCVR). Residues 586-600 (DNTSPIKGHSNQASF) show a composition bias toward polar residues. Residues 607–626 (SPSSPESMSPTSPHSPHSPS) show a composition bias toward low complexity. The segment covering 627–637 (CNNNISGNLGS) has biased composition (polar residues).

The protein belongs to the protein kinase superfamily. CAMK Ser/Thr protein kinase family. SNF1 subfamily.

It catalyses the reaction L-seryl-[protein] + ATP = O-phospho-L-seryl-[protein] + ADP + H(+). The enzyme catalyses L-threonyl-[protein] + ATP = O-phospho-L-threonyl-[protein] + ADP + H(+). The sequence is that of Hormonally up-regulated neu tumor-associated kinase homolog (hunk) from Xenopus tropicalis (Western clawed frog).